Consider the following 376-residue polypeptide: uncharacterized protein (376 aa).

Transmembrane regions (helical) follow at residues 153–173 and 188–208; these read QGTL…VLFA and HRPF…LAVY.

Its subcellular location is the membrane. This is an uncharacterized protein from Saccharomyces cerevisiae (strain ATCC 204508 / S288c) (Baker's yeast).